Consider the following 318-residue polypeptide: Methionyl-tRNA formyltransferase (318 aa).

111–114 (SLLP) provides a ligand contact to (6S)-5,6,7,8-tetrahydrofolate.

It belongs to the Fmt family.

It carries out the reaction L-methionyl-tRNA(fMet) + (6R)-10-formyltetrahydrofolate = N-formyl-L-methionyl-tRNA(fMet) + (6S)-5,6,7,8-tetrahydrofolate + H(+). In terms of biological role, attaches a formyl group to the free amino group of methionyl-tRNA(fMet). The formyl group appears to play a dual role in the initiator identity of N-formylmethionyl-tRNA by promoting its recognition by IF2 and preventing the misappropriation of this tRNA by the elongation apparatus. In Chlorobium limicola (strain DSM 245 / NBRC 103803 / 6330), this protein is Methionyl-tRNA formyltransferase.